The following is a 674-amino-acid chain: ATP-dependent DNA helicase Hel308 (674 aa).

ATP is bound by residues Gln-27 and 44 to 51; that span reads VPTAAGKT. The Helicase ATP-binding domain maps to 31–197; the sequence is IEQFRKGKNI…WLNASLIKSS (167 aa). The DEAH box motif lies at 142-145; that stretch reads DEIH. Positions 224 to 411 constitute a Helicase C-terminal domain; that stretch reads DINLLVKETV…PEKVRFNTLA (188 aa).

The protein belongs to the helicase family. Hel308 subfamily. In terms of assembly, monomer.

It catalyses the reaction Couples ATP hydrolysis with the unwinding of duplex DNA by translocating in the 3'-5' direction.. The enzyme catalyses ATP + H2O = ADP + phosphate + H(+). In terms of biological role, DNA-dependent ATPase and 3'-5' DNA helicase that may be involved in repair of stalled replication forks. This Thermoplasma volcanium (strain ATCC 51530 / DSM 4299 / JCM 9571 / NBRC 15438 / GSS1) protein is ATP-dependent DNA helicase Hel308.